A 252-amino-acid polypeptide reads, in one-letter code: 2-succinyl-6-hydroxy-2,4-cyclohexadiene-1-carboxylate synthase (252 aa).

This sequence belongs to the AB hydrolase superfamily. MenH family. Monomer.

It catalyses the reaction 5-enolpyruvoyl-6-hydroxy-2-succinyl-cyclohex-3-ene-1-carboxylate = (1R,6R)-6-hydroxy-2-succinyl-cyclohexa-2,4-diene-1-carboxylate + pyruvate. It participates in quinol/quinone metabolism; 1,4-dihydroxy-2-naphthoate biosynthesis; 1,4-dihydroxy-2-naphthoate from chorismate: step 3/7. The protein operates within quinol/quinone metabolism; menaquinone biosynthesis. Functionally, catalyzes a proton abstraction reaction that results in 2,5-elimination of pyruvate from 2-succinyl-5-enolpyruvyl-6-hydroxy-3-cyclohexene-1-carboxylate (SEPHCHC) and the formation of 2-succinyl-6-hydroxy-2,4-cyclohexadiene-1-carboxylate (SHCHC). The polypeptide is 2-succinyl-6-hydroxy-2,4-cyclohexadiene-1-carboxylate synthase (Shigella dysenteriae serotype 1 (strain Sd197)).